We begin with the raw amino-acid sequence, 670 residues long: NAD(P)H-quinone oxidoreductase subunit 5, chloroplastic (670 aa).

The next 16 helical transmembrane spans lie at 9-29, 39-59, 85-105, 120-140, 144-164, 188-208, 215-235, 258-278, 290-310, 327-347, 354-374, 395-415, 424-444, 479-499, 534-554, and 648-668; these read GLIP…LMSF, FVGS…LLFF, IGYL…SVAV, GYIR…GLIV, LIQV…LVGF, GLLL…FDII, LLLT…LLFL, TPIS…FLVA, LMIL…CLAV, LGYM…FHLI, ALLF…VGYD, GVTF…ACFW, AFFH…LTGF, MTLP…LGLP, SATS…LYSP, and LFVI…NSVF.

This sequence belongs to the complex I subunit 5 family. As to quaternary structure, NDH is composed of at least 16 different subunits, 5 of which are encoded in the nucleus.

It is found in the plastid. It localises to the chloroplast thylakoid membrane. It catalyses the reaction a plastoquinone + NADH + (n+1) H(+)(in) = a plastoquinol + NAD(+) + n H(+)(out). It carries out the reaction a plastoquinone + NADPH + (n+1) H(+)(in) = a plastoquinol + NADP(+) + n H(+)(out). NDH shuttles electrons from NAD(P)H:plastoquinone, via FMN and iron-sulfur (Fe-S) centers, to quinones in the photosynthetic chain and possibly in a chloroplast respiratory chain. The immediate electron acceptor for the enzyme in this species is believed to be plastoquinone. Couples the redox reaction to proton translocation, and thus conserves the redox energy in a proton gradient. The chain is NAD(P)H-quinone oxidoreductase subunit 5, chloroplastic (ndhF) from Chaetosphaeridium globosum (Charophycean green alga).